We begin with the raw amino-acid sequence, 219 residues long: Glutathione S-transferase-like protein LUC7 (219 aa).

Positions 3-84 constitute a GST N-terminal domain; it reads PFGRLYSFMP…YLAQSGPYSE (82 aa). The region spanning 90-219 is the GST C-terminal domain; sequence DAATSAKIRQ…NLIDVKRVHE (130 aa).

The protein belongs to the GST superfamily.

Glutathione S-transferase-like protein; part of the gene cluster that mediates the biosynthesis of the mycotoxin lucilactaene and the lucilactaene-related compound NG-391 that act as cell cycle inhibitors with potent growth inhibitory activity against malarial parasites, moderate growth inhibitory activity against cancer cells, and no activity against bacteria and fungi. Within the cluster, LUC7 and LUC8 encode proteins which are not commonly involved in the biosynthesis of secondary metabolites and are not essential for lucilactaene biosynthesis. The polypeptide is Glutathione S-transferase-like protein LUC7 (Fusarium sp).